Reading from the N-terminus, the 373-residue chain is Indole glucosinolate O-methyltransferase 4 (373 aa).

S-adenosyl-L-homocysteine is bound by residues glycine 217, aspartate 240, aspartate 260, methionine 261, and lysine 274. Residue histidine 278 is the Proton acceptor of the active site.

The protein belongs to the class I-like SAM-binding methyltransferase superfamily. Cation-independent O-methyltransferase family. As to quaternary structure, interacts with B'GAMMA.

The protein operates within secondary metabolite biosynthesis. Involved in indole glucosinolate biosynthesis. Catalyzes methoxylation reactions of the glucosinolate indole ring. Converts the hydroxy intermediates 4-hydroxy-indol-3-yl-methylglucosinolate (4OH-I3M) and 1-hydroxy-indol-3-yl-methylglucosinolate (1OH-I3M) to 4-methoxy-indol-3-yl-methylglucosinolate (4MO-I3M) and 1-methoxy-indol-3-yl-methylglucosinolate(1MO-I3M), respectively. The protein is Indole glucosinolate O-methyltransferase 4 of Arabidopsis thaliana (Mouse-ear cress).